The sequence spans 586 residues: 2-succinyl-5-enolpyruvyl-6-hydroxy-3-cyclohexene-1-carboxylate synthase (586 aa).

This sequence belongs to the TPP enzyme family. MenD subfamily. As to quaternary structure, homodimer. The cofactor is Mg(2+). It depends on Mn(2+) as a cofactor. Thiamine diphosphate serves as cofactor.

It carries out the reaction isochorismate + 2-oxoglutarate + H(+) = 5-enolpyruvoyl-6-hydroxy-2-succinyl-cyclohex-3-ene-1-carboxylate + CO2. The protein operates within quinol/quinone metabolism; 1,4-dihydroxy-2-naphthoate biosynthesis; 1,4-dihydroxy-2-naphthoate from chorismate: step 2/7. It participates in quinol/quinone metabolism; menaquinone biosynthesis. In terms of biological role, catalyzes the thiamine diphosphate-dependent decarboxylation of 2-oxoglutarate and the subsequent addition of the resulting succinic semialdehyde-thiamine pyrophosphate anion to isochorismate to yield 2-succinyl-5-enolpyruvyl-6-hydroxy-3-cyclohexene-1-carboxylate (SEPHCHC). The polypeptide is 2-succinyl-5-enolpyruvyl-6-hydroxy-3-cyclohexene-1-carboxylate synthase (Geobacillus thermodenitrificans (strain NG80-2)).